An 86-amino-acid polypeptide reads, in one-letter code: Large ribosomal subunit protein bL27 (86 aa).

The segment at 1-21 (MAHKKGASSSRNGRDSAAQRL) is disordered.

It belongs to the bacterial ribosomal protein bL27 family.

This chain is Large ribosomal subunit protein bL27 (rpmA), found in Mycobacterium tuberculosis (strain CDC 1551 / Oshkosh).